Reading from the N-terminus, the 192-residue chain is UPF0312 protein plu2095 (192 aa).

The N-terminal stretch at 1 to 23 is a signal peptide; sequence MLKKTLLGLTAGALLLNASSALA.

Belongs to the UPF0312 family. Type 1 subfamily.

Its subcellular location is the periplasm. The polypeptide is UPF0312 protein plu2095 (Photorhabdus laumondii subsp. laumondii (strain DSM 15139 / CIP 105565 / TT01) (Photorhabdus luminescens subsp. laumondii)).